The chain runs to 341 residues: D-erythrose-4-phosphate dehydrogenase (341 aa).

Residue 14-15 (RI) coordinates NAD(+). Residues 156-158 (SCT), Arg-202, 215-216 (TR), and Arg-238 each bind substrate. Cys-157 functions as the Nucleophile in the catalytic mechanism. Residue Asn-320 participates in NAD(+) binding.

This sequence belongs to the glyceraldehyde-3-phosphate dehydrogenase family. Epd subfamily. In terms of assembly, homotetramer.

It localises to the cytoplasm. The enzyme catalyses D-erythrose 4-phosphate + NAD(+) + H2O = 4-phospho-D-erythronate + NADH + 2 H(+). The protein operates within cofactor biosynthesis; pyridoxine 5'-phosphate biosynthesis; pyridoxine 5'-phosphate from D-erythrose 4-phosphate: step 1/5. Functionally, catalyzes the NAD-dependent conversion of D-erythrose 4-phosphate to 4-phosphoerythronate. The sequence is that of D-erythrose-4-phosphate dehydrogenase from Idiomarina loihiensis (strain ATCC BAA-735 / DSM 15497 / L2-TR).